The chain runs to 274 residues: Kit ligand (274 aa).

An N-terminal signal peptide occupies residues 1-25; that stretch reads MKKTQTWIITCIYLQLLLFNPLVRT. At 26 to 215 the chain is on the extracellular side; the sequence is KGICRNRVTD…ANPLGDSNLQ (190 aa). 2 disulfides stabilise this stretch: Cys-29–Cys-114 and Cys-68–Cys-164. N-linked (GlcNAc...) asparagine glycosylation is found at Asn-90, Asn-97, Asn-145, and Asn-196. The helical transmembrane segment at 216–238 threads the bilayer; the sequence is WAAMALPAFFSLVIGFAFGALYW. Residues 239-274 lie on the Cytoplasmic side of the membrane; sequence KKKQPNLTRTAENIQINEEDNEISMLQEKEREFQEV.

Belongs to the SCF family. Homodimer, non-covalently linked. Heterotetramer with KIT, binding two KIT molecules; thereby mediates KIT dimerization and subsequent activation by autophosphorylation. In terms of processing, a soluble form is produced by proteolytic processing of isoform 1 in the extracellular domain.

Its subcellular location is the cytoplasm. It is found in the cytoskeleton. It localises to the cell membrane. The protein localises to the cell projection. The protein resides in the lamellipodium. Its subcellular location is the filopodium. It is found in the secreted. Functionally, ligand for the receptor-type protein-tyrosine kinase KIT. Plays an essential role in the regulation of cell survival and proliferation, hematopoiesis, stem cell maintenance, gametogenesis, mast cell development, migration and function, and in melanogenesis. KITLG/SCF binding can activate several signaling pathways. Promotes phosphorylation of PIK3R1, the regulatory subunit of phosphatidylinositol 3-kinase, and subsequent activation of the kinase AKT1. KITLG/SCF and KIT also transmit signals via GRB2 and activation of RAS, RAF1 and the MAP kinases MAPK1/ERK2 and/or MAPK3/ERK1. KITLG/SCF and KIT promote activation of STAT family members STAT1, STAT3 and STAT5. KITLG/SCF and KIT promote activation of PLCG1, leading to the production of the cellular signaling molecules diacylglycerol and inositol 1,4,5-trisphosphate. KITLG/SCF acts synergistically with other cytokines, probably interleukins. The polypeptide is Kit ligand (KITLG) (Neovison vison (American mink)).